A 406-amino-acid polypeptide reads, in one-letter code: Phosphatidylinositol 5-phosphate 4-kinase type-2 alpha (406 aa).

At Ala2 the chain carries N-acetylalanine. Position 3 is a phosphothreonine (Thr3). Ser14 bears the Phosphoserine mark. The PIPK domain maps to Ala33–Leu405. The segment at Val59–Asp65 is required for interaction with PIP5K1A. Residues Lys89 and Lys145 each carry the N6-acetyllysine modification. The interval Gln288 to Pro329 is disordered. Over residues Glu289 to Ser304 the composition is skewed to acidic residues.

As to quaternary structure, homodimer. Interacts with PIP4K2B; the interaction may regulate localization to the nucleus. Probably interacts with PIP5K1A; the interaction inhibits PIP5K1A kinase activity. Phosphorylated in tyrosines. Phosphorylation is induced by light and increases kinase activity.

The protein resides in the cell membrane. The protein localises to the nucleus. It localises to the lysosome. Its subcellular location is the cytoplasm. It is found in the photoreceptor inner segment. The protein resides in the cell projection. The protein localises to the cilium. It localises to the photoreceptor outer segment. The catalysed reaction is a 1,2-diacyl-sn-glycero-3-phospho-(1D-myo-inositol-5-phosphate) + ATP = a 1,2-diacyl-sn-glycero-3-phospho-(1D-myo-inositol-4,5-bisphosphate) + ADP + H(+). It catalyses the reaction 1,2-dihexadecanoyl-sn-glycero-3-phospho-(1D-myo-inositol-5-phosphate) + ATP = 1,2-dihexadecanoyl-sn-glycero-3-phospho-(1D-myo-inositol-4,5-bisphosphate) + ADP + H(+). The enzyme catalyses 1,2-dihexadecanoyl-sn-glycero-3-phospho-(1D-myo-inositol-5-phosphate) + GTP = 1,2-dihexadecanoyl-sn-glycero-3-phospho-(1D-myo-inositol-4,5-bisphosphate) + GDP + H(+). Its activity is regulated as follows. In rod outer segments, activated by light. Its function is as follows. Catalyzes the phosphorylation of phosphatidylinositol 5-phosphate (PtdIns5P) on the fourth hydroxyl of the myo-inositol ring, to form phosphatidylinositol 4,5-bisphosphate (PtdIns(4,5)P2). Has both ATP- and GTP-dependent kinase activities. May exert its function by regulating the levels of PtdIns5P, which functions in the cytosol by increasing AKT activity and in the nucleus signals through ING2. May regulate the pool of cytosolic PtdIns5P in response to the activation of tyrosine phosphorylation. May be involved in thrombopoiesis, and the terminal maturation of megakaryocytes and regulation of their size. May negatively regulate insulin-stimulated glucose uptake by lowering the levels of PtdIns5P. This Sus scrofa (Pig) protein is Phosphatidylinositol 5-phosphate 4-kinase type-2 alpha (PIP4K2A).